The sequence spans 112 residues: Small ribosomal subunit protein bS6 (112 aa).

Belongs to the bacterial ribosomal protein bS6 family.

Its function is as follows. Binds together with bS18 to 16S ribosomal RNA. The sequence is that of Small ribosomal subunit protein bS6 from Chlamydia caviae (strain ATCC VR-813 / DSM 19441 / 03DC25 / GPIC) (Chlamydophila caviae).